The primary structure comprises 194 residues: Ribonuclease VapC1 (194 aa).

In terms of domain architecture, PINc spans 34 to 134 (YVIDTSAIIS…TDDYSIQNVA (101 aa)). 2 residues coordinate Mg(2+): aspartate 37 and aspartate 150.

It belongs to the PINc/VapC protein family. Mg(2+) serves as cofactor.

In terms of biological role, toxic component of a type II toxin-antitoxin (TA) system. An RNase. The sequence is that of Ribonuclease VapC1 from Thermoplasma acidophilum (strain ATCC 25905 / DSM 1728 / JCM 9062 / NBRC 15155 / AMRC-C165).